We begin with the raw amino-acid sequence, 346 residues long: Phosphoribosylformylglycinamidine cyclo-ligase (346 aa).

It belongs to the AIR synthase family.

Its subcellular location is the cytoplasm. The catalysed reaction is 2-formamido-N(1)-(5-O-phospho-beta-D-ribosyl)acetamidine + ATP = 5-amino-1-(5-phospho-beta-D-ribosyl)imidazole + ADP + phosphate + H(+). Its pathway is purine metabolism; IMP biosynthesis via de novo pathway; 5-amino-1-(5-phospho-D-ribosyl)imidazole from N(2)-formyl-N(1)-(5-phospho-D-ribosyl)glycinamide: step 2/2. The polypeptide is Phosphoribosylformylglycinamidine cyclo-ligase (Bacillus cereus (strain ATCC 10987 / NRS 248)).